Consider the following 111-residue polypeptide: MKTLLLALVVVAFMCLGSADEVGLGNEQIDRGRRQAIGPPFTRCSKCNRNWSPPFPLGLYTVSHVKSCGGHLSSIGQCGEDWVVKGCAKTCPTAGPGERVKCCYSPRCNKN.

The signal sequence occupies residues 1–19 (MKTLLLALVVVAFMCLGSA). The propeptide occupies 20–34 (DEVGLGNEQIDRGRR). At Gln35 the chain carries Pyrrolidone carboxylic acid. Cystine bridges form between Cys44/Cys68, Cys47/Cys87, Cys91/Cys102, and Cys103/Cys108.

This sequence belongs to the three-finger toxin family. Ancestral subfamily. Boigatoxin sub-subfamily. In terms of tissue distribution, expressed by the venom gland.

The protein localises to the secreted. Its function is as follows. Potent postsynaptic neurotoxin. Displays readily reversible competitive antagonism at the nicotinic acetylcholine receptor (nAChR). The polypeptide is Toxin 3FTx-Tri3 (Trimorphodon biscutatus (Western lyre snake)).